The sequence spans 193 residues: 3-isopropylmalate dehydratase small subunit (193 aa).

This sequence belongs to the LeuD family. LeuD type 1 subfamily. Heterodimer of LeuC and LeuD.

The enzyme catalyses (2R,3S)-3-isopropylmalate = (2S)-2-isopropylmalate. The protein operates within amino-acid biosynthesis; L-leucine biosynthesis; L-leucine from 3-methyl-2-oxobutanoate: step 2/4. Functionally, catalyzes the isomerization between 2-isopropylmalate and 3-isopropylmalate, via the formation of 2-isopropylmaleate. The protein is 3-isopropylmalate dehydratase small subunit of Bacillus anthracis (strain CDC 684 / NRRL 3495).